The chain runs to 426 residues: Serine--tRNA ligase (426 aa).

233–235 serves as a coordination point for L-serine; the sequence is TAE. ATP is bound at residue 264–266; that stretch reads RSE. Glu-287 provides a ligand contact to L-serine. Residue 351–354 coordinates ATP; it reads EISS. Position 387 (Ser-387) interacts with L-serine.

The protein belongs to the class-II aminoacyl-tRNA synthetase family. Type-1 seryl-tRNA synthetase subfamily. In terms of assembly, homodimer. The tRNA molecule binds across the dimer.

The protein resides in the cytoplasm. It carries out the reaction tRNA(Ser) + L-serine + ATP = L-seryl-tRNA(Ser) + AMP + diphosphate + H(+). It catalyses the reaction tRNA(Sec) + L-serine + ATP = L-seryl-tRNA(Sec) + AMP + diphosphate + H(+). Its pathway is aminoacyl-tRNA biosynthesis; selenocysteinyl-tRNA(Sec) biosynthesis; L-seryl-tRNA(Sec) from L-serine and tRNA(Sec): step 1/1. Catalyzes the attachment of serine to tRNA(Ser). Is also able to aminoacylate tRNA(Sec) with serine, to form the misacylated tRNA L-seryl-tRNA(Sec), which will be further converted into selenocysteinyl-tRNA(Sec). The protein is Serine--tRNA ligase of Clostridium botulinum (strain Langeland / NCTC 10281 / Type F).